Consider the following 404-residue polypeptide: MKLPIYLDYSATCPVDPRVAEKMVQYMTMDGTFGNPASRSHRYGWQAEEAVDTAREQIADLINADPREIVFTSGATESDNLAIKGAAHFYSKKGKHVITCKTEHKAVLDPCRQLEREGFEVTYLEPESNGLVDLSKLQAAMREDTVLVSIMHVNNEIGVIQDITAIGDLCRERKIVFHVDAAQSAGKLPIDVQEMKVDLISFSAHKAYGPKGIGALYVRRKPRIRLEAQMHGGGHERGFRSGTLPTHQIVGMGEAFRVAKEDMQKDYDHALALRNRLLDGVKDLEAVTVNGDLEQRVPHNLNVSFAFVEGESLLMSLKDLAVSSGSACTSASLEPSYVLRALGLDDELAHSSVRFSFGRFTTEAEIDYAIEQIRVAVTKLRDMSPLWDMYKEGIDLSTVEWAHH.

Residues 75–76 (AT), N155, Q183, and 203–205 (SAH) contribute to the pyridoxal 5'-phosphate site. K206 carries the post-translational modification N6-(pyridoxal phosphate)lysine. A pyridoxal 5'-phosphate-binding site is contributed by T243. C328 functions as the Cysteine persulfide intermediate in the catalytic mechanism. [2Fe-2S] cluster is bound at residue C328.

This sequence belongs to the class-V pyridoxal-phosphate-dependent aminotransferase family. NifS/IscS subfamily. As to quaternary structure, homodimer. Forms a heterotetramer with IscU, interacts with other sulfur acceptors. Requires pyridoxal 5'-phosphate as cofactor.

It is found in the cytoplasm. It catalyses the reaction (sulfur carrier)-H + L-cysteine = (sulfur carrier)-SH + L-alanine. Its pathway is cofactor biosynthesis; iron-sulfur cluster biosynthesis. In terms of biological role, master enzyme that delivers sulfur to a number of partners involved in Fe-S cluster assembly, tRNA modification or cofactor biosynthesis. Catalyzes the removal of elemental sulfur atoms from cysteine to produce alanine. Functions as a sulfur delivery protein for Fe-S cluster synthesis onto IscU, an Fe-S scaffold assembly protein, as well as other S acceptor proteins. This chain is Cysteine desulfurase IscS, found in Vibrio campbellii (strain ATCC BAA-1116).